The sequence spans 129 residues: uncharacterized protein (129 aa).

The tract at residues proline 44 to valine 63 is disordered. The segment covering arginine 46–arginine 58 has biased composition (basic and acidic residues). A run of 2 helical transmembrane segments spans residues isoleucine 78 to isoleucine 98 and alanine 109 to phenylalanine 129.

The protein resides in the cell membrane. This is an uncharacterized protein from Bacillus subtilis (strain 168).